A 332-amino-acid polypeptide reads, in one-letter code: DNA-directed RNA polymerase 2A (332 aa).

Active-site residues include Asp33, Lys108, and Asp265.

The protein belongs to the phage and mitochondrial RNA polymerase family.

It carries out the reaction RNA(n) + a ribonucleoside 5'-triphosphate = RNA(n+1) + diphosphate. Functionally, DNA-dependent RNA polymerase catalyzes the transcription of DNA into RNA using the four ribonucleoside triphosphates as substrates. In Nicotiana tabacum (Common tobacco), this protein is DNA-directed RNA polymerase 2A (RPOT2-SYL).